The chain runs to 510 residues: NAD(P)H-quinone oxidoreductase subunit 2 B, chloroplastic (510 aa).

Transmembrane regions (helical) follow at residues 24-44 (LLLF…GLIL), 57-77 (IPWL…ALLF), 99-119 (IFQF…VEYI), 124-144 (MAIT…MFLC), 150-170 (ITIF…SGYT), 183-203 (YLLM…WLYG), 229-249 (ISIA…PAPF), 295-315 (WHLL…LVAI), 323-343 (MLAY…IVGD), 347-367 (GYAS…GTFA), 395-415 (ALSS…AGFF), 418-438 (LHLF…IGLL), and 484-504 (MIVC…IIAI).

This sequence belongs to the complex I subunit 2 family. In terms of assembly, NDH is composed of at least 16 different subunits, 5 of which are encoded in the nucleus.

It is found in the plastid. It localises to the chloroplast thylakoid membrane. The catalysed reaction is a plastoquinone + NADH + (n+1) H(+)(in) = a plastoquinol + NAD(+) + n H(+)(out). The enzyme catalyses a plastoquinone + NADPH + (n+1) H(+)(in) = a plastoquinol + NADP(+) + n H(+)(out). Its function is as follows. NDH shuttles electrons from NAD(P)H:plastoquinone, via FMN and iron-sulfur (Fe-S) centers, to quinones in the photosynthetic chain and possibly in a chloroplast respiratory chain. The immediate electron acceptor for the enzyme in this species is believed to be plastoquinone. Couples the redox reaction to proton translocation, and thus conserves the redox energy in a proton gradient. This is NAD(P)H-quinone oxidoreductase subunit 2 B, chloroplastic from Ceratophyllum demersum (Rigid hornwort).